The chain runs to 298 residues: Probable 3-mercaptopyruvate sulfurtransferase (298 aa).

The Rhodanese 1 domain occupies 24-141; that stretch reads NAQKTVLLDA…WKTEGLELET (118 aa). The hinge stretch occupies residues 142 to 175; it reads GEPRTPKPVVYEGAKLNKDLVASFDDIVKVIESP. Residue Ser-164 is modified to Phosphoserine. One can recognise a Rhodanese 2 domain in the interval 176-292; sequence DAAGVHIVDA…YGKRANEDSS (117 aa). Substrate is bound at residue Arg-190. Residue Cys-252 is the Cysteine persulfide intermediate of the active site.

It localises to the mitochondrion. It carries out the reaction 2-oxo-3-sulfanylpropanoate + [thioredoxin]-dithiol = [thioredoxin]-disulfide + hydrogen sulfide + pyruvate + H(+). Its function is as follows. Required for formation of the 2-thio group of the 5-methoxycarbonylmethyl-2-thiouridine modified base in some tRNAs. The sequence is that of Probable 3-mercaptopyruvate sulfurtransferase (tum1) from Schizosaccharomyces pombe (strain 972 / ATCC 24843) (Fission yeast).